The sequence spans 637 residues: Early transcription factor 70 kDa subunit (637 aa).

One can recognise a Helicase ATP-binding domain in the interval 32–185 (RTIIDENRSV…GHIIDLMSEE (154 aa)). 45–52 (HIMGSGKT) is an ATP binding site. Residues 135–138 (DKAH) carry the DEXH box motif. Residues 327–507 (KFKYFINRIQ…VLPFDIKKLL (181 aa)) enclose the Helicase C-terminal domain.

This sequence belongs to the helicase family. VETF subfamily. Heterodimer of a 70 kDa and a 82 kDa subunit. Part of the early transcription complex composed of ETF, RAP94/OPG109, and the DNA-directed RNA polymerase.

It is found in the virion. Its function is as follows. Acts with RNA polymerase to initiate transcription from early gene promoters. Is recruited by the RPO-associated protein of 94 kDa RAP94/OPG109 to form the early transcription complex, which also contains the core RNA polymerase. ETF heterodimer binds to early gene promoters. This is Early transcription factor 70 kDa subunit (OPG118) from Homo sapiens (Human).